The primary structure comprises 198 residues: Cerebellin-4 (198 aa).

The N-terminal stretch at 1-24 (MGSARRALSVVPAVLLILVLPVWA) is a signal peptide. Residues Asn26 and Asn85 are each glycosylated (N-linked (GlcNAc...) asparagine). The C1q domain occupies 63-198 (AANSKVAFSA…TFSGFLVFPL (136 aa)).

Homohexamer; disulfide-linked homotrimers. The trimers are assembled via the globular C1q domains. The trimers associate via N-terminal cysteine residues to form disulfide-linked hexamers. May form oligomers with CBLN1, CBLN2 and CBLN3 prior to secretion. Once secreted, does not interact with other CBLN family members. Strongly interacts with DCC in a NTN1-displaceable fashion. Weakly binds to NRXN1 and NRXN2 long and short isoforms produced by alternative promoter usage. Interaction with NRXN3 short isoform is hardly detectable; no interaction at all with NRXN3 long isoform. Does not interact with NEO1, GRID1 and GRID2. Post-translationally, sialoglycoprotein. As to expression, expressed in brain with high levels in particular thalamic nuclei. In the thalamus, predominantly expressed in neurons within the parafascicular nucleus. Found in the hippocampus, mostly in the dendrites and somata of pyramidal neurons (at protein level). Very low or no expression in most other brain regions. Highly expressed in the ventral medial habenula.

It localises to the secreted. Its subcellular location is the synapse. Acts as a synaptic organizer in specific subsets of neurons in the brain. Essential for the formation and maintenance of inhibitory GABAergic synapses. Promotes the development of dendrite-targeting inhibitory GABAergic synapses made by somatostatin-positive interneurons. May contribute to the function of ventral medial habenula region of the brain implicated in the regulation of anxiety-related behaviors. May play a role in CBLN3 export from the endoplasmic reticulum and secretion. This chain is Cerebellin-4 (Cbln4), found in Mus musculus (Mouse).